The following is a 99-amino-acid chain: Large ribosomal subunit protein uL23 (99 aa).

It belongs to the universal ribosomal protein uL23 family. Part of the 50S ribosomal subunit. Contacts protein L29, and trigger factor when it is bound to the ribosome.

Its function is as follows. One of the early assembly proteins it binds 23S rRNA. One of the proteins that surrounds the polypeptide exit tunnel on the outside of the ribosome. Forms the main docking site for trigger factor binding to the ribosome. The polypeptide is Large ribosomal subunit protein uL23 (Shewanella woodyi (strain ATCC 51908 / MS32)).